A 131-amino-acid chain; its full sequence is Glycine cleavage system H protein (131 aa).

The region spanning 24-106 is the Lipoyl-binding domain; sequence IATLGISAFA…HGEGWLLKVR (83 aa). At Lys65 the chain carries N6-lipoyllysine.

This sequence belongs to the GcvH family. As to quaternary structure, the glycine cleavage system is composed of four proteins: P, T, L and H. The cofactor is (R)-lipoate.

The glycine cleavage system catalyzes the degradation of glycine. The H protein shuttles the methylamine group of glycine from the P protein to the T protein. The chain is Glycine cleavage system H protein from Microcystis aeruginosa (strain NIES-843 / IAM M-2473).